The sequence spans 543 residues: Ribonuclease Y (543 aa).

The chain crosses the membrane as a helical span at residues 4 to 24 (IIMIPVATAIVSLLVGTVIGY). In terms of domain architecture, KH spans 233–296 (TVSVVDLPNE…EIAKRAMERL (64 aa)). Residues 359–452 (VLSHSIEVGK…VVAADTISSA (94 aa)) enclose the HD domain.

Belongs to the RNase Y family.

Its subcellular location is the cell membrane. In terms of biological role, endoribonuclease that initiates mRNA decay. The chain is Ribonuclease Y from Lactobacillus helveticus (strain DPC 4571).